The following is a 147-amino-acid chain: Peptidyl-lysine N-acetyltransferase YjaB (147 aa).

The 142-residue stretch at 3–144 (ISIRRSRHEE…KPYPLLNLAY (142 aa)) folds into the N-acetyltransferase domain.

Belongs to the acetyltransferase family.

The catalysed reaction is L-lysyl-[protein] + acetyl-CoA = N(6)-acetyl-L-lysyl-[protein] + CoA + H(+). Its function is as follows. N-epsilon-lysine acetyltransferase that catalyzes acetylation of a large number of proteins. Binds acetyl-CoA. The chain is Peptidyl-lysine N-acetyltransferase YjaB (yjaB) from Escherichia coli (strain K12).